The following is a 148-amino-acid chain: Large ribosomal subunit protein bL9 (148 aa).

Belongs to the bacterial ribosomal protein bL9 family.

Its function is as follows. Binds to the 23S rRNA. The chain is Large ribosomal subunit protein bL9 from Frankia alni (strain DSM 45986 / CECT 9034 / ACN14a).